The sequence spans 134 residues: Putative STAG3-like protein 2 (134 aa).

In terms of domain architecture, SCD spans proline 10 to methionine 95.

It belongs to the SCC3 family.

Its subcellular location is the nucleus. This Homo sapiens (Human) protein is Putative STAG3-like protein 2 (STAG3L2).